Here is a 220-residue protein sequence, read N- to C-terminus: Adenylate kinase (220 aa).

10–15 (GAGKGT) provides a ligand contact to ATP. The segment at 30–59 (STGDMLRAAVKAGTPLGLKAKEVMDGGNLV) is NMP. AMP contacts are provided by residues Thr31, Arg36, 57–59 (NLV), 85–88 (GFPR), and Gln92. The tract at residues 122–159 (GRRVHPASGRTYHIRFNPPQTAGMDDETGEPLVQRADD) is LID. ATP contacts are provided by residues Arg123 and 132-133 (TY). AMP contacts are provided by Arg156 and Arg167. Residue Gly205 participates in ATP binding.

It belongs to the adenylate kinase family. Monomer.

The protein localises to the cytoplasm. It catalyses the reaction AMP + ATP = 2 ADP. The protein operates within purine metabolism; AMP biosynthesis via salvage pathway; AMP from ADP: step 1/1. Its function is as follows. Catalyzes the reversible transfer of the terminal phosphate group between ATP and AMP. Plays an important role in cellular energy homeostasis and in adenine nucleotide metabolism. This Chlorobium luteolum (strain DSM 273 / BCRC 81028 / 2530) (Pelodictyon luteolum) protein is Adenylate kinase.